The primary structure comprises 462 residues: Argininosuccinate lyase (462 aa).

Belongs to the lyase 1 family. Argininosuccinate lyase subfamily.

Its subcellular location is the cytoplasm. It carries out the reaction 2-(N(omega)-L-arginino)succinate = fumarate + L-arginine. It functions in the pathway amino-acid biosynthesis; L-arginine biosynthesis; L-arginine from L-ornithine and carbamoyl phosphate: step 3/3. The chain is Argininosuccinate lyase from Methylobacterium nodulans (strain LMG 21967 / CNCM I-2342 / ORS 2060).